We begin with the raw amino-acid sequence, 252 residues long: MKNRLTIGLLLAAIYLFWLLLSAPARLLALTLSDDARLAQTSGTLWQGEAHQASWRGVELAYLRWEFGFSTWLPGWHIRFNDPSGLRGQAWLHGLNEFVVREGRLVIPARLISQRLALGMPLEARGQLALTLPEASFNANGCRRIAASAVQWQDAALSSPAGLLELAQVNGKLSCTPAGALAVALTQDSHQLSLTGQGVLTPDGRYTFNGTLQPRQAAPALLTLLVAQNGRKDEQGRIPWRWQGEWLSEEKK.

Residues 1-4 lie on the Cytoplasmic side of the membrane; the sequence is MKNR. Residues 5 to 25 form a helical membrane-spanning segment; the sequence is LTIGLLLAAIYLFWLLLSAPA. The Periplasmic portion of the chain corresponds to 26–252; the sequence is RLLALTLSDD…QGEWLSEEKK (227 aa).

Belongs to the GSP N family.

It localises to the cell inner membrane. Involved in a type II secretion system (T2SS, formerly general secretion pathway, GSP) for the export of proteins. Required for the translocation of pullulanase. The polypeptide is Type II secretion system protein N (pulN) (Klebsiella pneumoniae).